Reading from the N-terminus, the 120-residue chain is Large ribosomal subunit protein uL18 (120 aa).

Part of the 50S ribosomal subunit; part of the 5S rRNA/L5/L18/L25 subcomplex. Contacts the 5S and 23S rRNAs.

In terms of biological role, this is one of the proteins that bind and probably mediate the attachment of the 5S RNA into the large ribosomal subunit, where it forms part of the central protuberance. This chain is Large ribosomal subunit protein uL18, found in Rhodopseudomonas palustris (strain ATCC BAA-98 / CGA009).